The following is a 169-amino-acid chain: Peptide methionine sulfoxide reductase MsrA (169 aa).

Residue cysteine 10 is part of the active site.

It belongs to the MsrA Met sulfoxide reductase family.

It carries out the reaction L-methionyl-[protein] + [thioredoxin]-disulfide + H2O = L-methionyl-(S)-S-oxide-[protein] + [thioredoxin]-dithiol. It catalyses the reaction [thioredoxin]-disulfide + L-methionine + H2O = L-methionine (S)-S-oxide + [thioredoxin]-dithiol. Its function is as follows. Has an important function as a repair enzyme for proteins that have been inactivated by oxidation. Catalyzes the reversible oxidation-reduction of methionine sulfoxide in proteins to methionine. This is Peptide methionine sulfoxide reductase MsrA from Streptococcus pyogenes serotype M28 (strain MGAS6180).